Consider the following 142-residue polypeptide: Putative pre-16S rRNA nuclease (142 aa).

The protein belongs to the YqgF nuclease family.

Its subcellular location is the cytoplasm. Could be a nuclease involved in processing of the 5'-end of pre-16S rRNA. The sequence is that of Putative pre-16S rRNA nuclease from Staphylococcus haemolyticus (strain JCSC1435).